Reading from the N-terminus, the 450-residue chain is Putative zinc metalloprotease TP_0600 (450 aa).

Residue histidine 18 coordinates Zn(2+). Glutamate 19 is an active-site residue. Residue histidine 22 participates in Zn(2+) binding. Residues 102-124 (IAFAGPLANVLMAVMVLALVSAL) traverse the membrane as a helical segment. The PDZ domain maps to 200 to 278 (TITPDRDAHT…SVVLTVLRSG (79 aa)). 2 consecutive transmembrane segments (helical) span residues 384 to 406 (VCVS…LILF) and 421 to 443 (VLYY…AFWN).

It belongs to the peptidase M50B family. Zn(2+) is required as a cofactor.

It is found in the cell inner membrane. The protein is Putative zinc metalloprotease TP_0600 of Treponema pallidum (strain Nichols).